The primary structure comprises 150 residues: Arginine repressor (150 aa).

Belongs to the ArgR family.

The protein localises to the cytoplasm. It participates in amino-acid biosynthesis; L-arginine biosynthesis [regulation]. Its function is as follows. Regulates arginine biosynthesis genes. The protein is Arginine repressor of Symbiobacterium thermophilum (strain DSM 24528 / JCM 14929 / IAM 14863 / T).